Reading from the N-terminus, the 819-residue chain is Myosin light chain kinase 3 (819 aa).

Residues 146–460 (VPWRRGSPGD…PGVGNPEPEQ (315 aa)) are disordered. S152 bears the Phosphoserine mark. Basic and acidic residues-rich tracts occupy residues 158–170 (EENK…EGAK) and 183–196 (DARE…KADV). Residues 307 to 318 (GPGPQCPGPPGL) show a composition bias toward pro residues. 3 positions are modified to phosphoserine: S355, S401, and S408. A Protein kinase domain is found at 515-770 (VCQHEVLGGG…ATQCLKHEWL (256 aa)). ATP-binding positions include 521–529 (LGGGRFGQV) and K544. D636 acts as the Proton acceptor in catalysis.

This sequence belongs to the protein kinase superfamily. CAMK Ser/Thr protein kinase family. The cofactor is Mg(2+). Phosphorylated on serine residues.

Its subcellular location is the cytoplasm. It catalyses the reaction L-seryl-[myosin light chain] + ATP = O-phospho-L-seryl-[myosin light chain] + ADP + H(+). It carries out the reaction L-threonyl-[myosin light chain] + ATP = O-phospho-L-threonyl-[myosin light chain] + ADP + H(+). Functionally, kinase that phosphorylates MYL2 in vitro. Promotes sarcomere formation in cardiomyocytes and increases cardiomyocyte contractility. The polypeptide is Myosin light chain kinase 3 (MYLK3) (Pongo abelii (Sumatran orangutan)).